The chain runs to 400 residues: Clotting factor B (400 aa).

Residues 1-23 form the signal peptide; the sequence is MTWICVITLFALASATLGNKVSR. Positions 36–80 constitute a Clip domain; the sequence is ECTARGGLKGSCKSLIDCPSVLATLKDSFPVVCSWNGRFQPIVCC. Disulfide bonds link C37–C79, C47–C68, and C53–C80. The propeptide at 104–124 is activation peptide; that stretch reads LPRLHISGCGKRKVKIDITTV. N-linked (GlcNAc...) asparagine glycosylation occurs at N140. The region spanning 148–392 is the Peptidase S1 domain; that stretch reads IAGGVEAKIG…YLDWIAKVTN (245 aa). Catalysis depends on charge relay system residues H192 and D240. N-linked (GlcNAc...) asparagine glycosylation is present at N251. 2 cysteine pairs are disulfide-bonded: C307–C329 and C340–C368. S344 acts as the Charge relay system in catalysis. N-linked (GlcNAc...) asparagine glycosylation occurs at N352.

It belongs to the peptidase S1 family. CLIP subfamily. In terms of assembly, upon activation by factor C, it is converted to a two-chain active form composed of a light and a heavy chain linked by a disulfide bond.

The protein localises to the secreted. The catalysed reaction is Selective cleavage of 98-Arg-|-Ile-99 bond in Limulus proclotting enzyme to form active clotting enzyme.. Its activity is regulated as follows. Strongly inhibited by alpha2-plasmin inhibitor and DFP. Partially inhibited by benzamidine, leupeptin and PCMB. Functionally, this enzyme is closely associated with an endotoxin-sensitive hemolymph coagulation system which may play important roles in both hemostasis and host defense mechanisms. Its active form catalyzes the activation of proclotting enzyme. Does not activate the mammalian coagulation factors factor IX, factor X, prothrombin, plasminogen, protein C or prekallikrein. Does not hydrolyze fibrinogen. Does not catalyze the activation of factor C or coagulogen. The polypeptide is Clotting factor B (Tachypleus tridentatus (Japanese horseshoe crab)).